The following is a 219-amino-acid chain: Histone H1.4 (219 aa).

Residues 1 to 15 (MSETAPAAPAAPAPA) are compositionally biased toward low complexity. Residues 1 to 41 (MSETAPAAPAAPAPAEKTPVKKKARKAAGGAKRKTSGPPVS) form a disordered region. N-acetylserine is present on serine 2. Serine 2 carries the phosphoserine modification. Lysine 17 carries the post-translational modification N6-acetyllysine. A Phosphothreonine modification is found at threonine 18. Positions 20–35 (VKKKARKAAGGAKRKT) are enriched in basic residues. Residue lysine 26 is modified to N6-acetyllysine; alternate. The residue at position 26 (lysine 26) is an N6-methyllysine; alternate. Lysine 34 bears the N6-(beta-hydroxybutyryl)lysine; alternate mark. At lysine 34 the chain carries N6-succinyllysine; alternate. Serine 36 is subject to Phosphoserine. The 74-residue stretch at 36–109 (SGPPVSELIT…GASGSFKLNK (74 aa)) folds into the H15 domain. Lysine 52 carries the N6-(beta-hydroxybutyryl)lysine modification. The residue at position 54 (arginine 54) is a Citrulline. An N6-(beta-hydroxybutyryl)lysine mark is found at lysine 64, lysine 85, lysine 90, and lysine 106. The segment at 92–219 (TLVQTKGTGA…KPKKTAAKKK (128 aa)) is disordered. Over residues 119 to 140 (KAKRAGAAKAKKPAGAAKKPKK) the composition is skewed to basic residues. Threonine 146 carries the post-translational modification Phosphothreonine. Composition is skewed to basic residues over residues 149-160 (KSTKKTPKKAKK) and 168-185 (KKAKSPKKAKATKAKKAP). Serine 150 carries the post-translational modification ADP-ribosylserine. Serine 187 is subject to Phosphoserine. Basic residues predominate over residues 192–219 (KTVKPKAAKPKTSKPKAAKPKKTAAKKK).

This sequence belongs to the histone H1/H5 family. In terms of processing, citrullination at Arg-54 (H1R54ci) by PADI4 takes place within the DNA-binding site of H1 and results in its displacement from chromatin and global chromatin decondensation, thereby promoting pluripotency and stem cell maintenance. ADP-ribosylated on Ser-55, Ser-113 and Ser-150 in response to DNA damage. Post-translationally, H1 histones are progressively phosphorylated during the cell cycle, becoming maximally phosphorylated during late G2 phase and M phase, and being dephosphorylated sharply thereafter. In terms of processing, acetylated at Lys-26. Deacetylated at Lys-26 by SIRT1. Hydroxybutyrylation of histones is induced by starvation.

The protein resides in the nucleus. Its subcellular location is the chromosome. In terms of biological role, histone H1 protein binds to linker DNA between nucleosomes forming the macromolecular structure known as the chromatin fiber. Histones H1 are necessary for the condensation of nucleosome chains into higher-order structured fibers. Also acts as a regulator of individual gene transcription through chromatin remodeling, nucleosome spacing and DNA methylation. In Mus musculus (Mouse), this protein is Histone H1.4.